The sequence spans 220 residues: Ribose-5-phosphate isomerase A (220 aa).

Residues T25–T28, D80–D83, and K93–G96 contribute to the substrate site. The active-site Proton acceptor is the E102. Position 120 (K120) interacts with substrate.

It belongs to the ribose 5-phosphate isomerase family. In terms of assembly, homodimer.

The catalysed reaction is aldehydo-D-ribose 5-phosphate = D-ribulose 5-phosphate. It participates in carbohydrate degradation; pentose phosphate pathway; D-ribose 5-phosphate from D-ribulose 5-phosphate (non-oxidative stage): step 1/1. Catalyzes the reversible conversion of ribose-5-phosphate to ribulose 5-phosphate. The protein is Ribose-5-phosphate isomerase A of Bacillus cereus (strain ATCC 10987 / NRS 248).